The primary structure comprises 491 residues: Glycylpeptide N-tetradecanoyltransferase (491 aa).

45–48 serves as a coordination point for tetradecanoyl-CoA; it reads HKFW. The tract at residues 53-79 is disordered; sequence VPQITGSGASAPMEEGPIDDPKTPADV. Tetradecanoyl-CoA contacts are provided by residues 182 to 184 and 190 to 194; these read LCV and SKRLA. Leu-491 (proton acceptor; via carboxylate) is an active-site residue.

Belongs to the NMT family. Monomer.

It localises to the cytoplasm. It carries out the reaction N-terminal glycyl-[protein] + tetradecanoyl-CoA = N-tetradecanoylglycyl-[protein] + CoA + H(+). Functionally, adds a myristoyl group to the N-terminal glycine residue of certain cellular proteins. The polypeptide is Glycylpeptide N-tetradecanoyltransferase (Cryptococcus neoformans (Filobasidiella neoformans)).